The chain runs to 600 residues: NADH-quinone oxidoreductase subunit C/D (600 aa).

Residues Met1–Glu190 are NADH dehydrogenase I subunit C. An NADH dehydrogenase I subunit D region spans residues Glu214–Arg600.

It in the N-terminal section; belongs to the complex I 30 kDa subunit family. In the C-terminal section; belongs to the complex I 49 kDa subunit family. In terms of assembly, NDH-1 is composed of 13 different subunits. Subunits NuoB, CD, E, F, and G constitute the peripheral sector of the complex.

The protein resides in the cell inner membrane. The enzyme catalyses a quinone + NADH + 5 H(+)(in) = a quinol + NAD(+) + 4 H(+)(out). In terms of biological role, NDH-1 shuttles electrons from NADH, via FMN and iron-sulfur (Fe-S) centers, to quinones in the respiratory chain. The immediate electron acceptor for the enzyme in this species is believed to be ubiquinone. Couples the redox reaction to proton translocation (for every two electrons transferred, four hydrogen ions are translocated across the cytoplasmic membrane), and thus conserves the redox energy in a proton gradient. This is NADH-quinone oxidoreductase subunit C/D from Buchnera aphidicola subsp. Acyrthosiphon pisum (strain APS) (Acyrthosiphon pisum symbiotic bacterium).